The primary structure comprises 345 residues: Nuclear distribution protein nudE-like 1 (345 aa).

Positions 28 to 190 form a coiled coil; that stretch reads QSFQEARDEL…LAVRERQQEV (163 aa). The interval 56–166 is self-association; that stretch reads VQAEQRNRDL…LDEKESLLVS (111 aa). An interaction with KATNB1 region spans residues 64–189; it reads DLQADNQRLK…ELAVRERQQE (126 aa). Residues 114 to 133 form a required for interaction with PAFAH1B1 region; it reads YVRELEQANDDLERAKRATI. Residues 175-345 are interaction with CENPF; the sequence is RDLRQELAVR…SAPGMLPLSV (171 aa). The interval 189 to 256 is interaction with YWHAE; the sequence is EVTRKSAPSS…SARISALNIV (68 aa). The segment at 191–345 is interaction with NEFL; that stretch reads TRKSAPSSPT…SAPGMLPLSV (155 aa). The interval 195–256 is interaction with KATNA1; the sequence is APSSPTLDCE…SARISALNIV (62 aa). Phosphoserine is present on S215. Phosphothreonine; by CDK1 and MAPK1 is present on T219. At S231 the chain carries Phosphoserine. Positions 241-280 are interaction with DISC1; the sequence is TSPLTPSARISALNIVGDLLRKVGALESKLAACRNFAKDQ. S242 bears the Phosphoserine; by CDK1 mark. Phosphothreonine; by CDK1 and MAPK1 is present on T245. Residues 256-291 form a required for localization to the centrosome and interaction with dynein, dynactin, tubulin gamma, PCM1 and PCNT region; that stretch reads VGDLLRKVGALESKLAACRNFAKDQASRKSYISGNV. Residue C273 is the site of S-palmitoyl cysteine; by ZDHHC2, ZDHHC3 and ZDHHC7 attachment. Positions 315-345 are disordered; it reads GAVNGFDPAPPPPGLGSSRPSSAPGMLPLSV. Over residues 329–339 the composition is skewed to low complexity; that stretch reads LGSSRPSSAPG. The residue at position 344 (S344) is a Phosphoserine.

Belongs to the nudE family. In terms of assembly, self-associates. Interacts with DISC1, dynein, dynactin, tubulin gamma, KATNA1, KATNB1, microtubules, PAFAH1B1, PCM1, PCNT, and YWHAE. Interacts directly with NEFL and indirectly with NEFH. Interacts (via C-terminus) with CENPF. Interacts with ZNF365. Interacts with PLEKHM1 (via N- and C-terminus). Interacts with GTP-bound RAB9A; the interaction may lead to RAB9A-dynein motor tethering. In terms of processing, phosphorylated in mitosis. Can be phosphorylated by CDK1, CDK5 and MAPK1. Phosphorylation by CDK5 promotes interaction with KATNA1 and YWHAE. Post-translationally, palmitoylation at Cys-273 reduces affinity for dynein.

It localises to the cytoplasm. The protein localises to the cytoskeleton. The protein resides in the microtubule organizing center. It is found in the centrosome. Its subcellular location is the chromosome. It localises to the centromere. The protein localises to the kinetochore. The protein resides in the spindle. In terms of biological role, required for organization of the cellular microtubule array and microtubule anchoring at the centrosome. May regulate microtubule organization at least in part by targeting the microtubule severing protein KATNA1 to the centrosome. Also positively regulates the activity of the minus-end directed microtubule motor protein dynein. May enhance dynein-mediated microtubule sliding by targeting dynein to the microtubule plus ends. Required for several dynein- and microtubule-dependent processes such as the maintenance of Golgi integrity, the centripetal motion of secretory vesicles and the coupling of the nucleus and centrosome. Also required during brain development for the migration of newly formed neurons from the ventricular/subventricular zone toward the cortical plate. Plays a role, together with DISC1, in the regulation of neurite outgrowth. Required for mitosis in some cell types but appears to be dispensible for mitosis in cortical neuronal progenitors, which instead requires NDE1. Facilitates the polymerization of neurofilaments from the individual subunits NEFH and NEFL. Positively regulates lysosome peripheral distribution and ruffled border formation in osteoclasts. Plays a role, together with DISC1, in the regulation of neurite outgrowth. May act as a RAB9A/B effector that tethers RAB9-associated late endosomes to the dynein motor for their retrograde transport to the trans-Golgi network. The chain is Nuclear distribution protein nudE-like 1 (NDEL1) from Pongo abelii (Sumatran orangutan).